A 94-amino-acid polypeptide reads, in one-letter code: Neutrophil defensin 6 (94 aa).

An N-terminal signal peptide occupies residues 1–19 (MRTIAILAAILLFALLAQA). A propeptide spanning residues 20–61 (KSLQETADEAATQEQPGEDDQDLAVSFEENGLSTLRASGSQA) is cleaved from the precursor. 3 disulfides stabilise this stretch: cysteine 65–cysteine 93, cysteine 67–cysteine 82, and cysteine 72–cysteine 92.

Belongs to the alpha-defensin family.

The protein localises to the secreted. Defensins 6 and 7 have bacteriostatic activity against Gram-positive bacteria S.aureus and L.monocytogenes and Gram-negative bacterium E.coli and antifungal activity against C.neoformans. Defensin 7 has microbicidial activity against Gram-positive bacteria S.aureus and L.monocytogenes. The chain is Neutrophil defensin 6 from Macaca mulatta (Rhesus macaque).